The chain runs to 469 residues: Putative dipeptidase SSP1012 (469 aa).

His84 is a binding site for Zn(2+). The active site involves Asp86. Asp115 is a Zn(2+) binding site. Glu149 acts as the Proton acceptor in catalysis. 3 residues coordinate Zn(2+): Glu150, Asp173, and His440.

The protein belongs to the peptidase M20A family. Zn(2+) serves as cofactor.

This Staphylococcus saprophyticus subsp. saprophyticus (strain ATCC 15305 / DSM 20229 / NCIMB 8711 / NCTC 7292 / S-41) protein is Putative dipeptidase SSP1012.